The primary structure comprises 263 residues: MNLREKYGEWGLILGATEGVGKAFCEKIAAGGMNVVMVGRREEKLNVLAGEIRETYGVETKVVRADFSQPGAAETVFAATEGLDMGFMSYVACLHSFGKIQDTPWEKHEAMINVNVVTFLKCFHHYMRIFAAQDRGAVINVSSMTGISSSPWNGQYGAGKAFILKMTEAVACECEGTGVDVEVITLGTTLTPSLLSNLPGGPQGEAVMKIALTPEECVDEAFEKLGKELSVIAGQRNKDSVHDWKANHTEDEYIRYMGSFYRD.

NADP(+) is bound by residues 17 to 21, 40 to 41, and 66 to 67; these read TEGVG, RR, and DF. Residue Tyr156 is the Proton acceptor of the active site. NADP(+) is bound at residue Ser240.

Belongs to the short-chain dehydrogenases/reductases (SDR) family. As to quaternary structure, homodimer.

It carries out the reaction a 7beta-hydroxysteroid + NADP(+) = a 7-oxosteroid + NADPH + H(+). It catalyses the reaction 7-oxolithocholate + NADPH + H(+) = ursodeoxycholate + NADP(+). The catalysed reaction is 7beta-hydroxy-3,12-dioxo-5beta-cholan-24-oate + NADP(+) = dehydrocholate + NADPH + H(+). The enzyme catalyses ursocholate + NADP(+) = 3alpha,12alpha-dihydroxy-7-oxo-5beta-cholanate + NADPH + H(+). Functionally, 7beta-hydroxysteroid dehydrogenase that catalyzes the reduction of the 7-oxo group of 7-oxo-lithocholate (7-oxo-LCA), to yield ursodeoxycholate (UDCA). As C.aerofaciens is an intestinal bacterium, this enzyme probably contributes to the formation of UDCA in the human colon. UDCA is regarded as a chemopreventive beneficial secondary bile acid due to its low hydrophobicity; it protects hepatocytes and bile duct epithelial cells against necrosis and apoptosis induced by more hydrophobic secondary bile acids like deoxycholate (DCA). This enzyme is also able to catalyze the reverse reaction, i.e. the oxidation of the 7beta-hydroxy group of UDCA to 7-oxo-LCA. To a lesser extent, is also active on the taurine- and glycine-conjugates of ursodeoxycholate. It is specific for NADPH/NADP(+) as the electron acceptor/donor since it is not active with NADH/NAD(+). In the presence of NADPH, 7beta-HSDH can also reduce dehydrocholate. And is also able to oxidize ursocholate. The sequence is that of 7beta-hydroxysteroid dehydrogenase from Collinsella aerofaciens (strain ATCC 25986 / DSM 3979 / JCM 10188 / KCTC 3647 / NCTC 11838 / VPI 1003).